The chain runs to 802 residues: MSFNHQDIEKKWQGYWEENKTFRTPDETEKPKFYALDMFPYPSGAGLHVGHPEGYTATDILSRMKRMQGYKVLHPMGWDAFGLPAEQYALDTGNSPAEFTEHNINTFRNQIKSLGFSYDWDREVNTTDPNYYKWTQWIFLKLFEKGLAYVDEVPVNWCPALGTVLANEEIIDGKSERGGHPVERRPMRQWMLKITAYGDRLLEDLDELDWPESLKDMQRNWIGRSEGAEVHFNIDGTDEKFTVFTTRPDTLFGATYCVLAPEHALVAEITTAEQKEAVEAYINAVKMKSDLERTELAKEKTGVFTGAYAVNPVNGEKLPIWIADYVLATYGTGAVMAVPAHDERDYEFASVFNLPMKEVVKGGDITKEVYTGDGAHVNSAFLDGLNKEEAIAKMIEWLEVTSAGNQKVTYRLRDWLFSRQRYWGEPIPVIHWEDGTMTAVKEEELPLVLPKTENIRPSGTGESPLANIDEWVNVVDPETGKKGRRETNTMPQWAGSCWYYLRYIDPNNSEALVDPEKVKQWLPVDIYIGGAEHAVLHLLYARFWHKVLYDIGVVPTKEPFQQLFNQGMILGENNEKMSKSKGNVVNPDDIVASHGADTLRLYEMFMGPLDASIAWSENGLDGARRFLDRVWRLFVQDNGELSEKITDAPNKELEKAYHQTVKKVTEDYAELRFNTAISQMMVFINDAYKAETLPKEYVEGFVKMIAPVAPHIGEELWSKLGYNETITYASWPIFDESKLVEDEVEIVVQVMGKVRAKLTMSKDASKEEMEQLALEAIQDQIEGKTVRKVIVVPGKLVNVVAN.

Positions 40-51 (PYPSGAGLHVGH) match the 'HIGH' region motif. The 'KMSKS' region signature appears at 576 to 580 (KMSKS). Residue K579 participates in ATP binding.

It belongs to the class-I aminoacyl-tRNA synthetase family.

It is found in the cytoplasm. The enzyme catalyses tRNA(Leu) + L-leucine + ATP = L-leucyl-tRNA(Leu) + AMP + diphosphate. This chain is Leucine--tRNA ligase, found in Bacillus cereus (strain G9842).